The following is a 392-amino-acid chain: Putative pectate lyase 21 (392 aa).

The N-terminal stretch at 1–21 (MSIVCTFFLFLLNTSFAFAFA) is a signal peptide. N38 carries N-linked (GlcNAc...) asparagine glycosylation. Positions 189, 213, and 217 each coordinate Ca(2+). N220 carries an N-linked (GlcNAc...) asparagine glycan. R269 is an active-site residue.

It belongs to the polysaccharide lyase 1 family. The cofactor is Ca(2+).

It carries out the reaction Eliminative cleavage of (1-&gt;4)-alpha-D-galacturonan to give oligosaccharides with 4-deoxy-alpha-D-galact-4-enuronosyl groups at their non-reducing ends.. It participates in glycan metabolism; pectin degradation; 2-dehydro-3-deoxy-D-gluconate from pectin: step 2/5. This Arabidopsis thaliana (Mouse-ear cress) protein is Putative pectate lyase 21.